The chain runs to 243 residues: DNA repair protein RecO (243 aa).

The protein belongs to the RecO family.

Involved in DNA repair and RecF pathway recombination. This Vibrio vulnificus (strain CMCP6) protein is DNA repair protein RecO.